Here is a 388-residue protein sequence, read N- to C-terminus: Succinate--CoA ligase [ADP-forming] subunit beta (388 aa).

Residues 9–244 form the ATP-grasp domain; that stretch reads KEILRKFGVA…LDEEDPAEIE (236 aa). ATP contacts are provided by residues Lys-46, 53-55, Glu-99, Ala-102, and Glu-107; that span reads GRG. Asn-199 and Asp-213 together coordinate Mg(2+). Substrate is bound by residues Asn-264 and 321-323; that span reads GIM.

The protein belongs to the succinate/malate CoA ligase beta subunit family. Heterotetramer of two alpha and two beta subunits. Mg(2+) serves as cofactor.

It catalyses the reaction succinate + ATP + CoA = succinyl-CoA + ADP + phosphate. It carries out the reaction GTP + succinate + CoA = succinyl-CoA + GDP + phosphate. It participates in carbohydrate metabolism; tricarboxylic acid cycle; succinate from succinyl-CoA (ligase route): step 1/1. Functionally, succinyl-CoA synthetase functions in the citric acid cycle (TCA), coupling the hydrolysis of succinyl-CoA to the synthesis of either ATP or GTP and thus represents the only step of substrate-level phosphorylation in the TCA. The beta subunit provides nucleotide specificity of the enzyme and binds the substrate succinate, while the binding sites for coenzyme A and phosphate are found in the alpha subunit. In Burkholderia vietnamiensis (strain G4 / LMG 22486) (Burkholderia cepacia (strain R1808)), this protein is Succinate--CoA ligase [ADP-forming] subunit beta.